Here is a 212-residue protein sequence, read N- to C-terminus: Thymidylate kinase (212 aa).

Position 11 to 18 (11 to 18 (GPEGAGKT)) interacts with ATP.

Belongs to the thymidylate kinase family.

It catalyses the reaction dTMP + ATP = dTDP + ADP. Its function is as follows. Phosphorylation of dTMP to form dTDP in both de novo and salvage pathways of dTTP synthesis. This Streptococcus pneumoniae (strain ATCC 700669 / Spain 23F-1) protein is Thymidylate kinase.